Here is a 371-residue protein sequence, read N- to C-terminus: Bifunctional enzyme IspD/IspF (371 aa).

The 2-C-methyl-D-erythritol 4-phosphate cytidylyltransferase stretch occupies residues Met1–Ile210. The segment at Phe211–Leu371 is 2-C-methyl-D-erythritol 2,4-cyclodiphosphate synthase. The a divalent metal cation site is built by Asp217 and His219. 4-CDP-2-C-methyl-D-erythritol 2-phosphate-binding positions include Asp217–His219 and His243–Ser244. His251 is an a divalent metal cation binding site. 4-CDP-2-C-methyl-D-erythritol 2-phosphate contacts are provided by residues Asp265–Gly267, Tyr270–Asp274, Thr341–Glu344, Phe348, and Arg351.

This sequence in the N-terminal section; belongs to the IspD/TarI cytidylyltransferase family. IspD subfamily. The protein in the C-terminal section; belongs to the IspF family. It depends on a divalent metal cation as a cofactor.

The enzyme catalyses 2-C-methyl-D-erythritol 4-phosphate + CTP + H(+) = 4-CDP-2-C-methyl-D-erythritol + diphosphate. It catalyses the reaction 4-CDP-2-C-methyl-D-erythritol 2-phosphate = 2-C-methyl-D-erythritol 2,4-cyclic diphosphate + CMP. The protein operates within isoprenoid biosynthesis; isopentenyl diphosphate biosynthesis via DXP pathway; isopentenyl diphosphate from 1-deoxy-D-xylulose 5-phosphate: step 2/6. It participates in isoprenoid biosynthesis; isopentenyl diphosphate biosynthesis via DXP pathway; isopentenyl diphosphate from 1-deoxy-D-xylulose 5-phosphate: step 4/6. Bifunctional enzyme that catalyzes the formation of 4-diphosphocytidyl-2-C-methyl-D-erythritol from CTP and 2-C-methyl-D-erythritol 4-phosphate (MEP) (IspD), and catalyzes the conversion of 4-diphosphocytidyl-2-C-methyl-D-erythritol 2-phosphate (CDP-ME2P) to 2-C-methyl-D-erythritol 2,4-cyclodiphosphate (ME-CPP) with a corresponding release of cytidine 5-monophosphate (CMP) (IspF). This chain is Bifunctional enzyme IspD/IspF, found in Campylobacter jejuni subsp. jejuni serotype O:23/36 (strain 81-176).